Consider the following 325-residue polypeptide: Large ribosomal subunit protein uL18 (325 aa).

The disordered stretch occupies residues 247–300; that stretch reads IRIPPSRRNPRRRSPRSGGRWPSCRSPPARRRSRSTRPTSWPRSRPTSKPKRPR. 2 stretches are compositionally biased toward low complexity: residues 262–273 and 282–291; these read RSGGRWPSCRSP and TRPTSWPRSR.

This sequence belongs to the universal ribosomal protein uL18 family. Component of the large ribosomal subunit (LSU).

The protein resides in the cytoplasm. It is found in the nucleus. In terms of biological role, component of the ribosome, a large ribonucleoprotein complex responsible for the synthesis of proteins in the cell. The small ribosomal subunit (SSU) binds messenger RNAs (mRNAs) and translates the encoded message by selecting cognate aminoacyl-transfer RNA (tRNA) molecules. The large subunit (LSU) contains the ribosomal catalytic site termed the peptidyl transferase center (PTC), which catalyzes the formation of peptide bonds, thereby polymerizing the amino acids delivered by tRNAs into a polypeptide chain. The nascent polypeptides leave the ribosome through a tunnel in the LSU and interact with protein factors that function in enzymatic processing, targeting, and the membrane insertion of nascent chains at the exit of the ribosomal tunnel. This chain is Large ribosomal subunit protein uL18 (RpL5), found in Anopheles gambiae (African malaria mosquito).